The sequence spans 538 residues: Adenine deaminase (538 aa).

Belongs to the metallo-dependent hydrolases superfamily. Adenine deaminase family. Mn(2+) is required as a cofactor.

The enzyme catalyses adenine + H2O + H(+) = hypoxanthine + NH4(+). The protein is Adenine deaminase of Methanothermobacter thermautotrophicus (strain ATCC 29096 / DSM 1053 / JCM 10044 / NBRC 100330 / Delta H) (Methanobacterium thermoautotrophicum).